The chain runs to 698 residues: Endogenous retrovirus group K member 9 Env polyprotein (698 aa).

Residues 1–47 (MNPSEMQRKAPPRRRRHRNRAPLTHKMNKMVTSEEQMKLPSTKKAEP) form a disordered region. Positions 1–89 (MNPSEMQRKA…ALMIVSMVVS (89 aa)) are cleaved as a signal peptide. The segment covering 10 to 20 (APPRRRRHRNR) has biased composition (basic residues). Topologically, residues 90-631 (LPMPAGAAAA…NLNPVTWVKT (542 aa)) are extracellular. N-linked (GlcNAc...) asparagine glycosylation is found at Asn100, Asn128, Asn153, Asn273, Asn354, Asn371, and Asn460. Positions 465–485 (FIFTLIAVIMGLIAVTATAAV) are fusion peptide. Residues Asn506, Asn553, Asn565, and Asn584 are each glycosylated (N-linked (GlcNAc...) asparagine). A helical transmembrane segment spans residues 632 to 652 (IGSTTIINLILILVCLFCLLL). Over 653–698 (VCRCTQQLRRDSDHRERAMMTMAVLSKRKGGNVGKSKRDQIVTVSV) the chain is Cytoplasmic.

It belongs to the beta type-B retroviral envelope protein family. HERV class-II K(HML-2) env subfamily. The surface (SU) and transmembrane (TM) proteins form a heterodimer. SU and TM are attached by noncovalent interactions or by a labile interchain disulfide bond. Post-translationally, specific enzymatic cleavages in vivo yield the mature SU and TM proteins.

The protein localises to the cell membrane. The protein resides in the virion. Functionally, retroviral envelope proteins mediate receptor recognition and membrane fusion during early infection. Endogenous envelope proteins may have kept, lost or modified their original function during evolution. This endogenous envelope protein has lost its original fusogenic properties. SU mediates receptor recognition. Its function is as follows. TM anchors the envelope heterodimer to the viral membrane through one transmembrane domain. The other hydrophobic domain, called fusion peptide, mediates fusion of the viral membrane with the target cell membrane. The polypeptide is Endogenous retrovirus group K member 9 Env polyprotein (ERVK-9) (Homo sapiens (Human)).